The sequence spans 93 residues: Small ribosomal subunit protein uS19 (93 aa).

This sequence belongs to the universal ribosomal protein uS19 family.

Protein S19 forms a complex with S13 that binds strongly to the 16S ribosomal RNA. The chain is Small ribosomal subunit protein uS19 from Geobacter metallireducens (strain ATCC 53774 / DSM 7210 / GS-15).